A 972-amino-acid chain; its full sequence is MDTDLYDEFGNYIGPELDSDEDDDELGRETKDLDEVDEDEDDDDVGDHDEDHPGMEVVLHEDKKYYPTAEEVYGPEVETIVQEEDTQPLTEPIIKPVKTKKFTLMEQTLPVTVYEMDSLADLMDNSELIRNVTLCGHLHHGKTCFVDCLIEQTHPEIRKRYDQDLCYTDILFTEQERGVGIKSTPVTVVLPDTKGKSYLFNIMDTPGHVNFSDEVTAGLRISDGVVLFIDAAEGVMLNTERLIKHAVQERLAVTVCINKIDRLILELKLPPTDAYYKLRHIVDEVNGLISMYSTDENLILSPLLGNVCFSSSQYSICFTLGSFAKIYADTFGDINYQEFAKRLWGDIYFNPKTRKFTKKAPTSSSQRSFVEFILEPLYKILAQVVGDVDTSLPRTLDELGIHLTKEELKLNIRPLLRLVCKKFFGEFTGFVDMCVQHIPSPKVGAKPKIEHTYTGGVDSDLGEAMSDCDPDGPLMCHTTKMYSTDDGVQFHAFGRVLSGTIHAGQPVKVLGENYTLEDEEDSQICTVGRLWISVARYHIEVNRVPAGNWVLIEGVDQPIVKTATITEPRGNEEAQIFRPLKFNTTSVIKIAVEPVNPSELPKMLDGLRKVNKSYPSLTTKVEESGEHVILGTGELYLDCVMHDLRKMYSEIDIKVADPVVTFCETVVETSSLKCFAETPNKKNKITMIAEPLEKGLAEDIENEVVQITWNRKKLGEFFQTKYDWDLLAARSIWAFGPDATGPNILVDDTLPSEVDKALLGSVKDSIVQGFQWGTREGPLCDELIRNVKFKILDAVVAQEPLHRGGGQIIPTARRVVYSAFLMATPRLMEPYYFVEVQAPADCVSAVYTVLARRRGHVTQDAPIPGSPLYTIKAFIPAIDSFGFETDLRTHTQGQAFSLSVFHHWQIVPGDPLDKSIVIRPLEPQPAPHLAREFMIKTRRRKGLSEDVSISKFFDDPMLLELAKQDVVLNYPM.

Met1 bears the N-acetylmethionine mark. Residues 1–53 (MDTDLYDEFGNYIGPELDSDEDDDELGRETKDLDEVDEDEDDDDVGDHDEDHP) form a disordered region. Composition is skewed to acidic residues over residues 17-26 (LDSDEDDDEL) and 34-48 (DEVD…VGDH). Ser19 carries the post-translational modification Phosphoserine. Lys64 is covalently cross-linked (Glycyl lysine isopeptide (Lys-Gly) (interchain with G-Cter in SUMO1); alternate). A Glycyl lysine isopeptide (Lys-Gly) (interchain with G-Cter in SUMO2); alternate cross-link involves residue Lys64. The residue at position 86 (Thr86) is a Phosphothreonine. Residues 127-409 (ELIRNVTLCG…GIHLTKEELK (283 aa)) enclose the tr-type G domain. Residues 136–143 (GHLHHGKT), 204–208 (DTPGH), and 258–261 (NKID) contribute to the GTP site.

Belongs to the TRAFAC class translation factor GTPase superfamily. Classic translation factor GTPase family. EF-G/EF-2 subfamily. In terms of assembly, component of the U5 snRNP and the U4/U6-U5 tri-snRNP complex, a building block of the spliceosome. The U4/U6-U5 tri-snRNP complex is composed of the U4, U6 and U5 snRNAs and at least PRPF3, PRPF4, PRPF6, PRPF8, PRPF31, SNRNP200, TXNL4A, SNRNP40, DDX23, CD2BP2, PPIH, SNU13, EFTUD2, SART1 and USP39. Component of the pre-catalytic, catalytic and post-catalytic spliceosome complexes. Component of the minor spliceosome, which splices U12-type introns. Within this complex, interacts with CRIPT. Interacts with ERBB4 and PRPF8. Interacts with PIH1D1. Interacts with RPAP3 and URI1 in a ZNHIT2-dependent manner. Interacts with NRDE2. Interacts with FAM50A. Interacts with UBL5.

The protein resides in the nucleus. In terms of biological role, required for pre-mRNA splicing as component of the spliceosome, including pre-catalytic, catalytic and post-catalytic spliceosomal complexes. Component of the U5 snRNP and the U4/U6-U5 tri-snRNP complex, a building block of the spliceosome. As a component of the minor spliceosome, involved in the splicing of U12-type introns in pre-mRNAs. The protein is 116 kDa U5 small nuclear ribonucleoprotein component (EFTUD2) of Bos taurus (Bovine).